A 230-amino-acid polypeptide reads, in one-letter code: Urease accessory protein UreE (230 aa).

A compositionally biased stretch (basic residues) spans 200–210; sequence HAIHSHGTGHT. Positions 200 to 230 are disordered; that stretch reads HAIHSHGTGHTHSHDHDHSHSHGDHDHDHKH. The segment covering 211 to 230 has biased composition (basic and acidic residues); that stretch reads HSHDHDHSHSHGDHDHDHKH.

This sequence belongs to the UreE family.

Its subcellular location is the cytoplasm. Its function is as follows. Involved in urease metallocenter assembly. Binds nickel. Probably functions as a nickel donor during metallocenter assembly. The sequence is that of Urease accessory protein UreE from Yersinia enterocolitica serotype O:8 / biotype 1B (strain NCTC 13174 / 8081).